A 130-amino-acid polypeptide reads, in one-letter code: Flagellar assembly factor FliW (130 aa).

It belongs to the FliW family. Interacts with translational regulator CsrA and flagellin(s).

The protein resides in the cytoplasm. Functionally, acts as an anti-CsrA protein, binds CsrA and prevents it from repressing translation of its target genes, one of which is flagellin. Binds to flagellin and participates in the assembly of the flagellum. This is Flagellar assembly factor FliW from Clostridioides difficile (strain 630) (Peptoclostridium difficile).